Here is a 71-residue protein sequence, read N- to C-terminus: Putative RNA-binding regulatory peptide (71 aa).

Interacts with IGF2BP1 (via KH3 and KH4 domains); the interaction results in increased binding of IGF2BP1 to N6-methyladenosine (m6A)-containing mRNAs. Detected in colon (at protein level).

Its function is as follows. Enhances binding of IGF2BP1 to N6-methyladenosine (m6A)-containing mRNAs, thereby contributing to increased mRNA stability. Also increases the interaction of IGF2BP1 with RNA stabilizers ELAVL1/HUR, MATR3 and PABPC1, and increases the interaction of RNA stabilizers ELAVL1/HUR, MATR3 and PABPC1 with m6A-containing mRNAs. Contributes to MYC stability by enhancing binding of IGF2BP1 to m6A-containing MYC mRNAs and increasing recruitment of RNA stabilizing proteins to m6A-containing MYC mRNAs. This is Putative RNA-binding regulatory peptide from Homo sapiens (Human).